Reading from the N-terminus, the 549-residue chain is Oxygen-dependent choline dehydrogenase (549 aa).

An FAD-binding site is contributed by 4–33 (DFVIIGSGSAGSAMAYRLSEDGRYSVIVIE). His465 serves as the catalytic Proton acceptor.

This sequence belongs to the GMC oxidoreductase family. FAD is required as a cofactor.

It carries out the reaction choline + A = betaine aldehyde + AH2. The catalysed reaction is betaine aldehyde + NAD(+) + H2O = glycine betaine + NADH + 2 H(+). Its pathway is amine and polyamine biosynthesis; betaine biosynthesis via choline pathway; betaine aldehyde from choline (cytochrome c reductase route): step 1/1. In terms of biological role, involved in the biosynthesis of the osmoprotectant glycine betaine. Catalyzes the oxidation of choline to betaine aldehyde and betaine aldehyde to glycine betaine at the same rate. The chain is Oxygen-dependent choline dehydrogenase from Brucella ovis (strain ATCC 25840 / 63/290 / NCTC 10512).